The following is a 184-amino-acid chain: 20.9 kDa protein (184 aa).

The chain is 20.9 kDa protein from Zymomonas mobilis subsp. mobilis (strain ATCC 10988 / DSM 424 / LMG 404 / NCIMB 8938 / NRRL B-806 / ZM1).